A 90-amino-acid polypeptide reads, in one-letter code: Co-chaperonin GroES (90 aa).

Belongs to the GroES chaperonin family. Heptamer of 7 subunits arranged in a ring. Interacts with the chaperonin GroEL.

Its subcellular location is the cytoplasm. Together with the chaperonin GroEL, plays an essential role in assisting protein folding. The GroEL-GroES system forms a nano-cage that allows encapsulation of the non-native substrate proteins and provides a physical environment optimized to promote and accelerate protein folding. GroES binds to the apical surface of the GroEL ring, thereby capping the opening of the GroEL channel. The protein is Co-chaperonin GroES of Borreliella burgdorferi (strain ATCC 35210 / DSM 4680 / CIP 102532 / B31) (Borrelia burgdorferi).